The sequence spans 309 residues: HPr kinase/phosphorylase (309 aa).

Active-site residues include histidine 138 and lysine 159. Residue 153–160 (GDSGIGKS) coordinates ATP. Residue serine 160 participates in Mg(2+) binding. Aspartate 177 (proton acceptor; for phosphorylation activity. Proton donor; for dephosphorylation activity) is an active-site residue. The tract at residues 201 to 210 (LEIRGVGIID) is important for the catalytic mechanism of both phosphorylation and dephosphorylation. Glutamate 202 contributes to the Mg(2+) binding site. Arginine 243 is a catalytic residue. The tract at residues 264-269 (PVKTGR) is important for the catalytic mechanism of dephosphorylation.

It belongs to the HPrK/P family. Homohexamer. Mg(2+) is required as a cofactor.

It carries out the reaction [HPr protein]-L-serine + ATP = [HPr protein]-O-phospho-L-serine + ADP + H(+). The enzyme catalyses [HPr protein]-O-phospho-L-serine + phosphate + H(+) = [HPr protein]-L-serine + diphosphate. Its function is as follows. Catalyzes the ATP- as well as the pyrophosphate-dependent phosphorylation of a specific serine residue in HPr, a phosphocarrier protein of the phosphoenolpyruvate-dependent sugar phosphotransferase system (PTS). HprK/P also catalyzes the pyrophosphate-producing, inorganic phosphate-dependent dephosphorylation (phosphorolysis) of seryl-phosphorylated HPr (P-Ser-HPr). The two antagonistic activities of HprK/P are regulated by several intracellular metabolites, which change their concentration in response to the absence or presence of rapidly metabolisable carbon sources (glucose, fructose, etc.) in the growth medium. Therefore, by controlling the phosphorylation state of HPr, HPrK/P is a sensor enzyme that plays a major role in the regulation of carbon metabolism and sugar transport: it mediates carbon catabolite repression (CCR), and regulates PTS-catalyzed carbohydrate uptake and inducer exclusion. This is HPr kinase/phosphorylase from Streptococcus thermophilus (strain ATCC BAA-250 / LMG 18311).